Consider the following 524-residue polypeptide: MLGMSLREAAAVLRLGQVKPTELCQKCLSLIKETSFLNAYITITEDIALKQAAEADKRFAQGKPLGELDGIPIAIKDNFSTAGIETTCASRMLKGYVAPYNATVVQKLFDQGAVLMGKTNLDEFGMGSGSTDSIFGPVRNPWSYSRSYIEKRPISHHAAKDDSDWVIAGGSSGGSACAVSAGTCYLAIGSDTGGSTRNPASHCGVVGLKPTYGLVSRHGLIPLVNSMDIPGILTRCVDDAATVLGMLAGHDLYDSTTVQDPFQPFSLPETIDLSNLCIGIPKEYHAPGLSTEILSLWSKTADLLEKAGAKVMEVSLPHTPYSIVCYHVLCTAEVASNMARFDGLEYGHRSDIDDSTEAMYAATRREGFNDVVRGRILSGNYFLLKQNYEKYFVKAQKVRRLIADDFVKVFNSGVHVLLTPTTLGDAAPYLEFIQEDNRTRSAEEDVFTQCTNMAGLPAVTVPAGLSSRGLPLGLQFIGRAFCERQLLTVAKWCEKQMDFSPLQFNRDLGNGSIVLQYSKSASFV.

Active-site charge relay system residues include Lys-76 and Ser-171. Ser-195 acts as the Acyl-ester intermediate in catalysis.

This sequence belongs to the amidase family. GatA subfamily. Subunit of the heterotrimeric GatCAB amidotransferase (AdT) complex, composed of A (qrsl1), B (gatb) and C (gatc) subunits.

The protein localises to the mitochondrion. It carries out the reaction L-glutamyl-tRNA(Gln) + L-glutamine + ATP + H2O = L-glutaminyl-tRNA(Gln) + L-glutamate + ADP + phosphate + H(+). Its function is as follows. Allows the formation of correctly charged Gln-tRNA(Gln) through the transamidation of misacylated Glu-tRNA(Gln) in the mitochondria. The reaction takes place in the presence of glutamine and ATP through an activated gamma-phospho-Glu-tRNA(Gln). This chain is Glutamyl-tRNA(Gln) amidotransferase subunit A, mitochondrial (qrsl1), found in Xenopus laevis (African clawed frog).